The chain runs to 444 residues: Ribosomal protein uS12 methylthiotransferase RimO (444 aa).

An MTTase N-terminal domain is found at 4-118 (YKIGLISLGC…IQNYIDDFFN (115 aa)). The [4Fe-4S] cluster site is built by Cys-13, Cys-48, Cys-81, Cys-155, Cys-159, and Cys-162. A Radical SAM core domain is found at 141–371 (TTAKHMAYIR…MSIQQNVSSK (231 aa)). Residues 374–440 (KNKLEKVYKV…EYDLIGVVCD (67 aa)) form the TRAM domain.

The protein belongs to the methylthiotransferase family. RimO subfamily. It depends on [4Fe-4S] cluster as a cofactor.

Its subcellular location is the cytoplasm. It catalyses the reaction L-aspartate(89)-[ribosomal protein uS12]-hydrogen + (sulfur carrier)-SH + AH2 + 2 S-adenosyl-L-methionine = 3-methylsulfanyl-L-aspartate(89)-[ribosomal protein uS12]-hydrogen + (sulfur carrier)-H + 5'-deoxyadenosine + L-methionine + A + S-adenosyl-L-homocysteine + 2 H(+). Functionally, catalyzes the methylthiolation of an aspartic acid residue of ribosomal protein uS12. The polypeptide is Ribosomal protein uS12 methylthiotransferase RimO (Clostridium novyi (strain NT)).